We begin with the raw amino-acid sequence, 467 residues long: Argininosuccinate lyase (467 aa).

It belongs to the lyase 1 family. Argininosuccinate lyase subfamily.

The protein localises to the cytoplasm. It catalyses the reaction 2-(N(omega)-L-arginino)succinate = fumarate + L-arginine. Its pathway is amino-acid biosynthesis; L-arginine biosynthesis; L-arginine from L-ornithine and carbamoyl phosphate: step 3/3. This Anaeromyxobacter sp. (strain K) protein is Argininosuccinate lyase.